Reading from the N-terminus, the 755-residue chain is Polyribonucleotide nucleotidyltransferase (755 aa).

Mg(2+) is bound by residues D493 and D499. Positions 560 to 619 constitute a KH domain; that stretch reads PRIMTIQIPVDKIGALIGPGGKTIRNICETTGAQIDIEDDGRVFITTPDGAAARQAISMI. Residues 629–698 form the S1 motif domain; sequence GDIFLGKVVS…TTGKISLSRR (70 aa). Positions 699–755 are disordered; sequence AVLTGETPEERKAAGAAPRPRPREEQRGGRDEPRSLRDELRGPRREGDRPRPRRRDD. Residues 719–755 are compositionally biased toward basic and acidic residues; that stretch reads RPREEQRGGRDEPRSLRDELRGPRREGDRPRPRRRDD.

This sequence belongs to the polyribonucleotide nucleotidyltransferase family. It depends on Mg(2+) as a cofactor.

The protein resides in the cytoplasm. It carries out the reaction RNA(n+1) + phosphate = RNA(n) + a ribonucleoside 5'-diphosphate. Functionally, involved in mRNA degradation. Catalyzes the phosphorolysis of single-stranded polyribonucleotides processively in the 3'- to 5'-direction. The polypeptide is Polyribonucleotide nucleotidyltransferase (Chloroflexus aurantiacus (strain ATCC 29366 / DSM 635 / J-10-fl)).